Here is a 529-residue protein sequence, read N- to C-terminus: MLLAVLYCLLWSFQTSAGHFPRACVSSKNLMEKECCPPWSGDRSPCGQLSGRGSCQNILLSNAPLGPQFPFTGVDDRESWPSVFYNRTCQCSGNFMGFNCGNCKFGFWGPNCTERRLLVRRNIFDLSAPEKDKFFAYLTLAKHTISSDYVIPIGTYGQMKNGSTPMFNDINIYDLFVWMHYYVSMDALLGGSEIWRDIDFAHEAPAFLPWHRLFLLRWEQEIQKLTGDENFTIPYWDWRDAEKCDICTDEYMGGQHPTNPNLLSPASFFSSWQIVCSRLEEYNSHQSLCNGTPEGPLQRNPGNHDKSRTPRLPSSADVEFCLSLTQYESGSMDKAANFSFRNTLEGFASPLTGIADASQSSMHNALHIYMNGTMSQVQGSANDPIFLLHHAFVDSIFEQWLRRHRPLQEVYPEANAPIGHNRESYMVPFIPLYRNGDFFISSKDLGYDYSYLQDSDPDSFQDYIKSYLEQASRIWSWLLGAAMVGAVLTALLAGLVSLLCRHKRKQLPEEKQPLLMEKEDYHSLYQSHL.

Positions 1-18 are cleaved as a signal peptide; the sequence is MLLAVLYCLLWSFQTSAG. The Lumenal, melanosome segment spans residues 19 to 476; the sequence is HFPRACVSSK…YLEQASRIWS (458 aa). Residues N86, N111, and N161 are each glycosylated (N-linked (GlcNAc...) asparagine). Cu cation contacts are provided by H180, H202, and H211. N230 carries an N-linked (GlcNAc...) asparagine glycan. Residues 287–313 are disordered; the sequence is SLCNGTPEGPLQRNPGNHDKSRTPRLP. The N-linked (GlcNAc...) asparagine glycan is linked to N337. Cu cation-binding residues include H363 and H367. N-linked (GlcNAc...) asparagine glycosylation occurs at N371. A Cu cation-binding site is contributed by H390. Residues 477-497 form a helical membrane-spanning segment; it reads WLLGAAMVGAVLTALLAGLVS. Over 498–529 the chain is Cytoplasmic; sequence LLCRHKRKQLPEEKQPLLMEKEDYHSLYQSHL.

It belongs to the tyrosinase family. As to quaternary structure, forms an OPN3-dependent complex with DCT in response to blue light in melanocytes. Cu(2+) serves as cofactor. Glycosylated.

It is found in the melanosome membrane. The protein resides in the melanosome. It catalyses the reaction 2 L-dopa + O2 = 2 L-dopaquinone + 2 H2O. The enzyme catalyses L-tyrosine + O2 = L-dopaquinone + H2O. It carries out the reaction 2 5,6-dihydroxyindole-2-carboxylate + O2 = 2 indole-5,6-quinone-2-carboxylate + 2 H2O. Its function is as follows. This is a copper-containing oxidase that functions in the formation of pigments such as melanins and other polyphenolic compounds. Catalyzes the initial and rate limiting step in the cascade of reactions leading to melanin production from tyrosine. In addition to hydroxylating tyrosine to DOPA (3,4-dihydroxyphenylalanine), also catalyzes the oxidation of DOPA to DOPA-quinone, and possibly the oxidation of DHI (5,6-dihydroxyindole) to indole-5,6 quinone. The polypeptide is Tyrosinase (TYR) (Gorilla gorilla gorilla (Western lowland gorilla)).